A 164-amino-acid chain; its full sequence is Endoribonuclease YbeY (164 aa).

Residues histidine 117, histidine 121, and histidine 127 each coordinate Zn(2+).

It belongs to the endoribonuclease YbeY family. It depends on Zn(2+) as a cofactor.

It localises to the cytoplasm. Its function is as follows. Single strand-specific metallo-endoribonuclease involved in late-stage 70S ribosome quality control and in maturation of the 3' terminus of the 16S rRNA. The protein is Endoribonuclease YbeY of Mycoplasma mycoides subsp. mycoides SC (strain CCUG 32753 / NCTC 10114 / PG1).